The primary structure comprises 500 residues: NAD(P)H-quinone oxidoreductase chain 4, chloroplastic (500 aa).

14 consecutive transmembrane segments (helical) span residues 4-24 (FPWLTILVVLPIFAGSLIFFL), 37-57 (ISICLLEFLLMTYAFCYHFQL), 87-107 (LGSILLTGFITTLATLAAWPI), 113-130 (LFYFLMLAMYSGQIGLFS), 134-154 (LLLFFIMWELELIPVYLLLSM), 167-187 (FILYTAGGSIFFLIGVLGMGL), 211-231 (ILLYFGFLIAYAVKLPIIPLH), 242-262 (HYSTCMLLAGILLKMGAYGLI), 272-292 (AHYLFSPWLVIIGAIQIIYAA), 313-333 (MGFIIIGIGSITNIGLNGAIL), 334-354 (QILSHGFIGATLFFLAGTASD), 386-406 (LALPGMSGFVAELVVFFGLIT), 417-437 (LITFVMAIGMILTPIYLLSML), and 462-482 (LFILICIFLPVIGIGIYPDFV).

Belongs to the complex I subunit 4 family.

The protein localises to the plastid. Its subcellular location is the chloroplast thylakoid membrane. The enzyme catalyses a plastoquinone + NADH + (n+1) H(+)(in) = a plastoquinol + NAD(+) + n H(+)(out). It carries out the reaction a plastoquinone + NADPH + (n+1) H(+)(in) = a plastoquinol + NADP(+) + n H(+)(out). This Triticum aestivum (Wheat) protein is NAD(P)H-quinone oxidoreductase chain 4, chloroplastic (ndhD).